We begin with the raw amino-acid sequence, 1036 residues long: Zinc finger protein 532 (1036 aa).

4 disordered regions span residues 26–92 (PKAA…LHNG), 106–206 (GAKS…EAES), 220–265 (RKAE…PSSK), and 281–362 (AASD…KVRI). Residues 32-52 (SGHDDHESHIKQNAHVDDDSH) show a composition bias toward basic and acidic residues. Residues S130, S133, and S134 each carry the phosphoserine modification. Residues 136–151 (EEFEDDEKIEVDDPPD) are compositionally biased toward acidic residues. N6-acetyllysine is present on K175. Over residues 182-193 (ENSSKTGVSTSG) the composition is skewed to polar residues. Composition is skewed to basic and acidic residues over residues 194–205 (HTDKNKVKREAE) and 220–249 (RKAEDKLKENSEKMLESRVLDGKPSSEKSD). A compositionally biased stretch (low complexity) spans 253–265 (AAAASSKTKPSSK). Positions 302–314 (EVNDSPKAADKSP) are enriched in basic and acidic residues. 2 positions are modified to phosphoserine: S306 and S313. The span at 336–353 (SVSSENSSKGSPSSPVGS) shows a compositional bias: low complexity. The residue at position 433 (S433) is a Phosphoserine. Residues K458 and K515 each participate in a glycyl lysine isopeptide (Lys-Gly) (interchain with G-Cter in SUMO2) cross-link. The C2H2-type 1; degenerate zinc finger occupies 615 to 634 (YKCLECGDAFALEKSLSQHY). The C2H2-type 2; degenerate zinc-finger motif lies at 751-775 (LKCLECNEVFQDEPSLATHFQHAAD). The C2H2-type 3 zinc finger occupies 784-807 (HPCRQCDKSFSSSHSLCRHNRIKH). Residues 814 to 840 (YACSHCPDSRRTFTKRLMLERHIQLMH) form a C2H2-type 4; degenerate zinc finger. Residues 847-877 (VKELSDDAGDVTNDEEEEAEIKEDAKVPSPK) form a disordered region. Positions 852 to 867 (DDAGDVTNDEEEEAEI) are enriched in acidic residues. Residues 868–877 (KEDAKVPSPK) are compositionally biased toward basic and acidic residues. S875 bears the Phosphoserine mark. Glycyl lysine isopeptide (Lys-Gly) (interchain with G-Cter in SUMO2) cross-links involve residues K879 and K902. 2 consecutive C2H2-type zinc fingers follow at residues 938–961 (HQCRECGLCYTSHGSLARHLFIVH) and 999–1021 (RKCKVCAKTFETEAALNTHMRTH). Residues 966–1000 (PQPVSKQNGAGEDSQQENKPSPEDEAAEGAASDRK) form a disordered region.

The protein belongs to the krueppel C2H2-type zinc-finger protein family.

Its subcellular location is the nucleus. Its function is as follows. May be involved in transcriptional regulation. The sequence is that of Zinc finger protein 532 (Znf532) from Mus musculus (Mouse).